The sequence spans 524 residues: MDRPPMVCLVVLDGWAIGPDYPGNAIRAAHTPVMDRLQATYPMTTLRCWGRDVGLPDDQMGNSEVGHLNLGAGRIVYQLITRIDLAIEDGSFFQNEAFQRALDRARQPGRTLHLMGLIGDGGVHSHQRHLLALLELAARAGISRVAVHAFTDGRDTAPTSGIEHLRELLAALDRLRTGFVATVSGRYYAMDRDKRWERTKLAYDAIVCGLGQTARSPLEAIERSYAQGITDEFIVPTVIVDAEGKPLATINDGDAVIFFNFRADRARQLTQALTDAGGFTAFPRCRWPRDLLMVTMAEYEPHFPVLVAFAPDIVRVPLARVLSDVGLRQFHTAETEKYAHVTYFFNGGREEPFPGEDRLLVPSPKVPTYDLKPEMSAPEVTDAAVQAIVSQRYAFVLVNYANPDMVGHTGVFAAAVAAVECVDRCLGRIEQAVRSVNGYLVVTADHGNADEMLVPGTNEVWTAHTKNPVPFILVAPNHSPFRSVALRTGGRLADVAPTILEIMGLPQPEEMTGRSLIVAPSVGR.

The Mn(2+) site is built by D13 and S63. The active-site Phosphoserine intermediate is S63. Residues H124, 154–155 (RD), R186, R192, 262–265 (RADR), and K337 contribute to the substrate site. Positions 404, 408, 445, 446, and 464 each coordinate Mn(2+).

The protein belongs to the BPG-independent phosphoglycerate mutase family. Monomer. It depends on Mn(2+) as a cofactor.

The catalysed reaction is (2R)-2-phosphoglycerate = (2R)-3-phosphoglycerate. It functions in the pathway carbohydrate degradation; glycolysis; pyruvate from D-glyceraldehyde 3-phosphate: step 3/5. Catalyzes the interconversion of 2-phosphoglycerate and 3-phosphoglycerate. The polypeptide is 2,3-bisphosphoglycerate-independent phosphoglycerate mutase (Thermomicrobium roseum (strain ATCC 27502 / DSM 5159 / P-2)).